A 548-amino-acid polypeptide reads, in one-letter code: Chaperonin GroEL (548 aa).

ATP contacts are provided by residues 30–33, Lys-51, 87–91, Gly-415, 479–481, and Asp-495; these read TLGP, DGTTT, and NAA.

It belongs to the chaperonin (HSP60) family. Forms a cylinder of 14 subunits composed of two heptameric rings stacked back-to-back. Interacts with the co-chaperonin GroES.

The protein localises to the cytoplasm. The enzyme catalyses ATP + H2O + a folded polypeptide = ADP + phosphate + an unfolded polypeptide.. In terms of biological role, together with its co-chaperonin GroES, plays an essential role in assisting protein folding. The GroEL-GroES system forms a nano-cage that allows encapsulation of the non-native substrate proteins and provides a physical environment optimized to promote and accelerate protein folding. The protein is Chaperonin GroEL of Escherichia fergusonii (strain ATCC 35469 / DSM 13698 / CCUG 18766 / IAM 14443 / JCM 21226 / LMG 7866 / NBRC 102419 / NCTC 12128 / CDC 0568-73).